Consider the following 47-residue polypeptide: Protein PsbN (47 aa).

The chain crosses the membrane as a helical span at residues 7 to 29; the sequence is VAISISCLLISFTGYALYTAFGN.

Belongs to the PsbN family.

It localises to the plastid membrane. In terms of biological role, may play a role in photosystem I and II biogenesis. This chain is Protein PsbN, found in Aneura mirabilis (Parasitic liverwort).